The following is a 95-amino-acid chain: Stationary phase-expressed protein 1 (95 aa).

Residues 20–38 form a helical membrane-spanning segment; the sequence is FRYIMLGLVGAAVVPTAYM.

Its subcellular location is the mitochondrion membrane. This Saccharomyces cerevisiae (strain RM11-1a) (Baker's yeast) protein is Stationary phase-expressed protein 1 (SPG1).